Consider the following 632-residue polypeptide: tRNA endonuclease VMS1 (632 aa).

The segment at M72–H96 adopts a C2H2-type zinc-finger fold. The disordered stretch occupies residues H123 to Q155. The VLRF1 domain maps to P232 to L392. The active site involves Q295. ANK repeat units follow at residues L470–I500 and L504–E530. Coiled-coil stretches lie at residues L544–A582 and T608–Y632. The span at K578 to P589 shows a compositional bias: basic and acidic residues. Residues K578 to Y632 are disordered. The span at N595–T608 shows a compositional bias: polar residues. Residues D609 to Y632 are compositionally biased toward basic and acidic residues.

It belongs to the ANKZF1/VMS1 family. As to quaternary structure, associates with 60S ribosomal subunit. Interacts with CDC48. Interacts with NPL4.

The protein localises to the cytoplasm. The protein resides in the mitochondrion. It is found in the endoplasmic reticulum membrane. In terms of biological role, endonuclease that cleaves polypeptidyl-tRNAs downstream of the ribosome-associated quality control (RQC) pathway to release incompletely synthesized polypeptides for degradation. The RQC pathway disassembles aberrantly stalled translation complexes to recycle or degrade the constituent parts. VMS1 acts downstream disassembly of stalled ribosomes and specifically cleaves off the terminal 3'-CCA nucleotides universal to all tRNAs from polypeptidyl-tRNAs, releasing (1) ubiquitinated polypeptides from 60S ribosomal subunit for degradation by the ERAD pathway and (2) cleaved tRNAs for recycling. Component of an evolutionarily conserved system for ubiquitin-mediated mitochondria-associated protein degradation (MAD), which is necessary to maintain mitochondrial, cellular, and organismal viability. The sequence is that of tRNA endonuclease VMS1 from Saccharomyces cerevisiae (strain ATCC 204508 / S288c) (Baker's yeast).